Here is a 295-residue protein sequence, read N- to C-terminus: Histone deacetylase HDT1 (295 aa).

The disordered stretch occupies residues 105-271 (SDFSDSSEED…TPNSAGQLSC (167 aa)). Residues 109-118 (DSSEEDEELA) are compositionally biased toward acidic residues. The span at 123-135 (DNGKPELKAEGAK) shows a compositional bias: basic and acidic residues. The segment covering 159–199 (EDDDSDDESDDDLAGEDESGSSDEMDDDSNSEEESDGDDEE) has biased composition (acidic residues). Residues 200–213 (TPAKKVDQGKKRPN) are compositionally biased toward basic and acidic residues. The segment covering 254–271 (TPNSTKGQTPNSAGQLSC) has biased composition (polar residues). The C2H2-type zinc finger occupies 269–292 (LSCASCKKSFTNEAGLQQHKKAKH).

Belongs to the histone deacetylase HD2 family.

The protein resides in the nucleus. The protein localises to the nucleolus. Its function is as follows. Mediates the deacetylation of lysine residues on the N-terminal part of the core histones (H2A, H2B, H3 and H4). Histone deacetylation gives a tag for epigenetic repression and plays an important role in transcriptional regulation, cell cycle progression and developmental events. The chain is Histone deacetylase HDT1 (HDT1) from Glycine max (Soybean).